The sequence spans 730 residues: Elongation factor 2 (730 aa).

Residues 19–260 (QRIRNIGIVA…MVIHFLPNPL (242 aa)) enclose the tr-type G domain. GTP-binding positions include 28 to 35 (AHIDHGKT), 94 to 98 (DTPGH), and 148 to 151 (NKVD). Histidine 596 carries the diphthamide modification.

It belongs to the TRAFAC class translation factor GTPase superfamily. Classic translation factor GTPase family. EF-G/EF-2 subfamily.

The protein resides in the cytoplasm. Its function is as follows. Catalyzes the GTP-dependent ribosomal translocation step during translation elongation. During this step, the ribosome changes from the pre-translocational (PRE) to the post-translocational (POST) state as the newly formed A-site-bound peptidyl-tRNA and P-site-bound deacylated tRNA move to the P and E sites, respectively. Catalyzes the coordinated movement of the two tRNA molecules, the mRNA and conformational changes in the ribosome. In Methanosarcina mazei (strain ATCC BAA-159 / DSM 3647 / Goe1 / Go1 / JCM 11833 / OCM 88) (Methanosarcina frisia), this protein is Elongation factor 2.